We begin with the raw amino-acid sequence, 189 residues long: Flavin prenyltransferase UbiX (189 aa).

FMN is bound by residues 10-12 (GAS), serine 37, 88-91 (SIKT), and arginine 123. Residues tyrosine 153 and arginine 169 each contribute to the dimethylallyl phosphate site.

The protein belongs to the UbiX/PAD1 family.

It catalyses the reaction dimethylallyl phosphate + FMNH2 = prenylated FMNH2 + phosphate. The protein operates within cofactor biosynthesis; ubiquinone biosynthesis. In terms of biological role, flavin prenyltransferase that catalyzes the synthesis of the prenylated FMN cofactor (prenyl-FMN) for 4-hydroxy-3-polyprenylbenzoic acid decarboxylase UbiD. The prenyltransferase is metal-independent and links a dimethylallyl moiety from dimethylallyl monophosphate (DMAP) to the flavin N5 and C6 atoms of FMN. In Escherichia coli O157:H7, this protein is Flavin prenyltransferase UbiX.